A 229-amino-acid polypeptide reads, in one-letter code: Large ribosomal subunit protein uL1 (229 aa).

Belongs to the universal ribosomal protein uL1 family. Part of the 50S ribosomal subunit.

Its function is as follows. Binds directly to 23S rRNA. The L1 stalk is quite mobile in the ribosome, and is involved in E site tRNA release. Functionally, protein L1 is also a translational repressor protein, it controls the translation of the L11 operon by binding to its mRNA. The polypeptide is Large ribosomal subunit protein uL1 (Streptococcus pneumoniae serotype 2 (strain D39 / NCTC 7466)).